A 397-amino-acid polypeptide reads, in one-letter code: Elongation factor Tu (397 aa).

In terms of domain architecture, tr-type G spans 10-207; sequence LPHCNVGTIG…TLDSYIPQPE (198 aa). The tract at residues 19–26 is G1; sequence GHVDHGKT. 19-26 contacts GTP; the sequence is GHVDHGKT. T26 lines the Mg(2+) pocket. The interval 60 to 64 is G2; the sequence is GITIN. The segment at 81–84 is G3; sequence DCPG. GTP is bound by residues 81-85 and 136-139; these read DCPGH and NKAD. Positions 136 to 139 are G4; that stretch reads NKAD. Residues 174 to 176 form a G5 region; that stretch reads SAR.

The protein belongs to the TRAFAC class translation factor GTPase superfamily. Classic translation factor GTPase family. EF-Tu/EF-1A subfamily. In terms of assembly, monomer.

Its subcellular location is the cytoplasm. The catalysed reaction is GTP + H2O = GDP + phosphate + H(+). Functionally, GTP hydrolase that promotes the GTP-dependent binding of aminoacyl-tRNA to the A-site of ribosomes during protein biosynthesis. This chain is Elongation factor Tu, found in Pseudomonas syringae pv. tomato (strain ATCC BAA-871 / DC3000).